The following is a 990-amino-acid chain: DNA ligase 4 (990 aa).

The tract at residues 57-84 (TQKKGRQPPGPRRKAGPHGHSNLSPHEA) is disordered. 10 residues coordinate ATP: glutamate 324, lysine 326, leucine 327, arginine 331, glutamate 394, phenylalanine 436, glutamate 496, lysine 501, lysine 518, and lysine 520. The active-site N6-AMP-lysine intermediate is lysine 326. Mg(2+) is bound at residue glutamate 394. A Mg(2+)-binding site is contributed by glutamate 496. BRCT domains lie at 728 to 821 (PQSK…LPYL) and 900 to 989 (YMFS…RYQW).

It belongs to the ATP-dependent DNA ligase family. The cofactor is Mg(2+).

Its subcellular location is the nucleus. It carries out the reaction ATP + (deoxyribonucleotide)n-3'-hydroxyl + 5'-phospho-(deoxyribonucleotide)m = (deoxyribonucleotide)n+m + AMP + diphosphate.. In terms of biological role, DNA ligase involved in DNA non-homologous end joining (NHEJ); required for double-strand break (DSB) repair. This is DNA ligase 4 (LIG4) from Phaeosphaeria nodorum (strain SN15 / ATCC MYA-4574 / FGSC 10173) (Glume blotch fungus).